Here is a 137-residue protein sequence, read N- to C-terminus: Peptide methionine sulfoxide reductase MsrB (137 aa).

The MsrB domain occupies 7–129 (PEELKNGLSE…NSASLSFTDE (123 aa)). 4 residues coordinate Zn(2+): C46, C49, C95, and C98. C118 functions as the Nucleophile in the catalytic mechanism.

Belongs to the MsrB Met sulfoxide reductase family. Requires Zn(2+) as cofactor.

The catalysed reaction is L-methionyl-[protein] + [thioredoxin]-disulfide + H2O = L-methionyl-(R)-S-oxide-[protein] + [thioredoxin]-dithiol. This is Peptide methionine sulfoxide reductase MsrB from Klebsiella pneumoniae subsp. pneumoniae (strain ATCC 700721 / MGH 78578).